Here is a 480-residue protein sequence, read N- to C-terminus: Glucosylglycerol phosphorylase (480 aa).

Asp190 (nucleophile) is an active-site residue. Substrate is bound at residue Tyr194. The active-site Proton donor is the Glu231. Gln336 contributes to the substrate binding site.

It belongs to the glycosyl hydrolase 13 family. Sucrose phosphorylase subfamily.

It catalyses the reaction 2-O-(alpha-D-glucopyranosyl)glycerol + phosphate = alpha-D-glucose 1-phosphate + glycerol. Its function is as follows. Catalyzes the reversible phosphorolysis of 2-O-alpha-D-glucosylglycerol with retention of the anomeric configuration, forming alpha-D-glucose 1-phosphate and glycerol. Has most likely a catabolic role, either regulating the intracellular levels of glucosylglycerol, which acts as a compatible solute, or degrading it when the environmental conditions change. Cannot catalyze the phosphorolysis of sucrose or glucosylglycerate. The protein is Glucosylglycerol phosphorylase of Marinobacter adhaerens (strain DSM 23420 / HP15).